Reading from the N-terminus, the 887-residue chain is Fibroblast growth factor receptor 2 (887 aa).

The signal sequence occupies residues 1-18 (MLNKFIVIVTMLAMWNYA). Over 19–416 (QDCNFELSKN…KDCVGNSYFT (398 aa)) the chain is Extracellular. Ig-like C2-type domains lie at 22 to 115 (NFEL…EFIS) and 180 to 260 (VSGS…LRMK). 9 N-linked (GlcNAc...) asparagine glycosylation sites follow: asparagine 28, asparagine 74, asparagine 93, asparagine 230, asparagine 261, asparagine 268, asparagine 328, asparagine 334, and asparagine 364. An intrachain disulfide couples cysteine 43 to cysteine 104. In terms of domain architecture, Ig-like C2-type 3 spans 297-387 (FNLNSRVCIN…YACRIINFKD (91 aa)). A disulfide bridge connects residues cysteine 313 and cysteine 380. Residues 417–437 (IIWYSISVGIIILVVISFLII) traverse the membrane as a helical segment. Over 438–887 (RLYNKYSNGY…SNQCYSTTIV (450 aa)) the chain is Cytoplasmic. The region spanning 585–862 (LIIGSKIGEG…IIDKLTHIQL (278 aa)) is the Protein kinase domain. ATP is bound by residues 591–599 (IGEGAFGIV) and lysine 619. The Proton acceptor role is filled by aspartate 728. Phosphotyrosine; by autocatalysis is present on tyrosine 757.

It belongs to the protein kinase superfamily. Tyr protein kinase family. Fibroblast growth factor receptor subfamily. Expressed in brain, stem cells and the mesenchymal cells.

The protein resides in the membrane. The catalysed reaction is L-tyrosyl-[protein] + ATP = O-phospho-L-tyrosyl-[protein] + ADP + H(+). Its function is as follows. Receptor for basic fibroblast growth factor. The chain is Fibroblast growth factor receptor 2 (FGFR2) from Dugesia japonica (Planarian).